The following is an 817-amino-acid chain: Protein EFR3 homolog B (817 aa).

3 positions are modified to phosphoserine: Ser212, Ser214, and Ser216.

Belongs to the EFR3 family. Component of a phosphatidylinositol 4-kinase (PI4K) complex, composed of PI4KA, EFR3 (EFR3A or EFR3B), TTC7 (TTC7A or TTC7B) and HYCC (HYCC1 or HYCC2). In terms of processing, palmitoylated at its N-terminus, anchoring the protein to the plasma membrane.

It localises to the cell membrane. The protein localises to the cytoplasm. It is found in the cytosol. Component of a complex required to localize phosphatidylinositol 4-kinase (PI4K) to the plasma membrane. The complex acts as a regulator of phosphatidylinositol 4-phosphate (PtdIns(4)P) synthesis. In the complex, EFR3B probably acts as the membrane-anchoring component. Also involved in responsiveness to G-protein-coupled receptors; it is however unclear whether this role is direct or indirect. The polypeptide is Protein EFR3 homolog B (Homo sapiens (Human)).